We begin with the raw amino-acid sequence, 271 residues long: Formamidopyrimidine-DNA glycosylase (271 aa).

The active-site Schiff-base intermediate with DNA is P2. E3 acts as the Proton donor in catalysis. K58 acts as the Proton donor; for beta-elimination activity in catalysis. Residues H92, R111, and R152 each coordinate DNA. An FPG-type zinc finger spans residues 237–271 (FVYGREGEACKQCGRVLKHATIGQRATVWCGSCQR). Catalysis depends on R261, which acts as the Proton donor; for delta-elimination activity.

Belongs to the FPG family. In terms of assembly, monomer. Requires Zn(2+) as cofactor.

It catalyses the reaction Hydrolysis of DNA containing ring-opened 7-methylguanine residues, releasing 2,6-diamino-4-hydroxy-5-(N-methyl)formamidopyrimidine.. It carries out the reaction 2'-deoxyribonucleotide-(2'-deoxyribose 5'-phosphate)-2'-deoxyribonucleotide-DNA = a 3'-end 2'-deoxyribonucleotide-(2,3-dehydro-2,3-deoxyribose 5'-phosphate)-DNA + a 5'-end 5'-phospho-2'-deoxyribonucleoside-DNA + H(+). Its function is as follows. Involved in base excision repair of DNA damaged by oxidation or by mutagenic agents. Acts as a DNA glycosylase that recognizes and removes damaged bases. Has a preference for oxidized purines, such as 7,8-dihydro-8-oxoguanine (8-oxoG). Has AP (apurinic/apyrimidinic) lyase activity and introduces nicks in the DNA strand. Cleaves the DNA backbone by beta-delta elimination to generate a single-strand break at the site of the removed base with both 3'- and 5'-phosphates. This chain is Formamidopyrimidine-DNA glycosylase, found in Xanthomonas axonopodis pv. citri (strain 306).